Here is a 281-residue protein sequence, read N- to C-terminus: MVEQLLLPLWNSLATVDDETLPLMSTALLIARDEYPDLDANLYDTLVQSYVEYLRSEVEEISLWPLKMAAVNRYLFQKLGYSGNHDEYYDPRNSYLNQVFERRLGNPISLAVIQIEVARRLGIPLDGVSFPGHFLVRLPVDDGILVMDPFNGGRPLDAEELRERVRPHLGGEVPDDRALAQILNPAPHRTILVRILRNLHSVYANTNRWDRAARCADRILKLVPNQPEALRDRGLAYLQLGHRSGARNDLTRYLQLYPSTHNVDMVRGHLVDLSNERIQTH.

2 TPR repeats span residues 193–226 and 227–260; these read VRIL…VPNQ and PEAL…YPST.

It belongs to the UPF0162 family.

The sequence is that of UPF0162 protein XF_1494 from Xylella fastidiosa (strain 9a5c).